Here is a 350-residue protein sequence, read N- to C-terminus: L-serine dehydratase (350 aa).

Lys-62 bears the N6-(pyridoxal phosphate)lysine mark.

Belongs to the serine/threonine dehydratase family. Pyridoxal 5'-phosphate is required as a cofactor.

The protein localises to the cytoplasm. It carries out the reaction L-serine = pyruvate + NH4(+). It functions in the pathway carbohydrate biosynthesis; gluconeogenesis. The sequence is that of L-serine dehydratase (sds) from Dictyostelium discoideum (Social amoeba).